Here is a 132-residue protein sequence, read N- to C-terminus: EF-hand calcium-binding domain-containing protein 10 (132 aa).

EF-hand domains are found at residues 64–99 (MDNS…LGLC) and 120–132 (EMNK…WSMF).

This is EF-hand calcium-binding domain-containing protein 10 (Efcab10) from Mus musculus (Mouse).